The chain runs to 468 residues: E3 ubiquitin-protein ligase TRIM11 (468 aa).

Residues 16–57 (CAICLDYFTDPVMTDCGHNFCRECIRRCWGQPEGPYACPECR) form an RING-type zinc finger. S85 is modified (phosphoserine). The B box-type zinc-finger motif lies at 87–128 (VPQGVCAAHREPLAAFCGDELRLLCAACERSGEHWAHRVRPL). C92, H95, C114, and H120 together coordinate Zn(2+). Residues 128 to 233 (LQDAAEDLKS…QLAELITELE (106 aa)) are a coiled coil. The region spanning 268 to 461 (EMRTVCRVPG…MTICRLKGGP (194 aa)) is the B30.2/SPRY domain. K458 participates in a covalent cross-link: Glycyl lysine isopeptide (Lys-Gly) (interchain with G-Cter in ubiquitin).

Belongs to the TRIM/RBCC family. In terms of assembly, binds cytoplasmic tail of integrin alpha-1. Interacts with the HN peptide. Interacts with PHOX2B. Interacts (when autoubiquitinated) with SQSTM1/p62; promoting AIM2 recruitment to autophagosomes. Interacts with AIM2; promoting its autophagy-dependent degradation. In terms of processing, autoubiquitinated upon DNA stimulation; autoubiquitination promotes interaction with SQSTM1/p62 and recruitment of AIM2 to autophagosomes.

The protein resides in the cytoplasm. The protein localises to the nucleus. It carries out the reaction S-ubiquitinyl-[E2 ubiquitin-conjugating enzyme]-L-cysteine + [acceptor protein]-L-lysine = [E2 ubiquitin-conjugating enzyme]-L-cysteine + N(6)-ubiquitinyl-[acceptor protein]-L-lysine.. It functions in the pathway protein modification; protein ubiquitination. In terms of biological role, E3 ubiquitin-protein ligase that promotes the degradation of insoluble ubiquitinated proteins, including insoluble PAX6, poly-Gln repeat expanded HTT and poly-Ala repeat expanded ARX. Mediates PAX6 ubiquitination leading to proteasomal degradation, thereby modulating cortical neurogenesis. May also inhibit PAX6 transcriptional activity, possibly in part by preventing the binding of PAX6 to its consensus sequences. May contribute to the regulation of the intracellular level of HN (humanin) or HN-containing proteins through the proteasomal degradation pathway. Mediates MED15 ubiquitination leading to proteasomal degradation. May contribute to the innate restriction of retroviruses. Upon overexpression, reduces HIV-1 and murine leukemia virus infectivity, by suppressing viral gene expression. Antiviral activity depends on a functional E3 ubiquitin-protein ligase domain. May regulate TRIM5 turnover via the proteasome pathway, thus counteracting the TRIM5-mediated cross-species restriction of retroviral infection at early stages of the retroviral life cycle. Acts as an inhibitor of the AIM2 inflammasome by promoting autophagy-dependent degradation of AIM2. Mechanistically, undergoes autoubiquitination upon DNA stimulation, promoting interaction with AIM2 and SQSTM1/p62, leading to AIM2 recruitment to autophagosomes. The chain is E3 ubiquitin-protein ligase TRIM11 (TRIM11) from Bos taurus (Bovine).